The sequence spans 219 residues: Adenylate kinase (219 aa).

12–17 (GAGKGT) lines the ATP pocket. The segment at 32–61 (STGDMLRAAVKAGTPIGLQAKAVMDAGELV) is NMP. Residues threonine 33, arginine 38, 59–61 (ELV), 87–90 (GYPR), and glutamine 94 each bind AMP. The tract at residues 128 to 165 (GRFSCARCGEGYHDRYKLPKVADICDVCGSKEFKRRPD) is LID. Arginine 129 lines the ATP pocket. Cysteine 132, cysteine 135, cysteine 152, and cysteine 155 together coordinate Zn(2+). AMP contacts are provided by arginine 162 and arginine 174. Alanine 202 contacts ATP.

Belongs to the adenylate kinase family. Monomer.

Its subcellular location is the cytoplasm. It catalyses the reaction AMP + ATP = 2 ADP. It functions in the pathway purine metabolism; AMP biosynthesis via salvage pathway; AMP from ADP: step 1/1. Its function is as follows. Catalyzes the reversible transfer of the terminal phosphate group between ATP and AMP. Plays an important role in cellular energy homeostasis and in adenine nucleotide metabolism. This Sphingopyxis alaskensis (strain DSM 13593 / LMG 18877 / RB2256) (Sphingomonas alaskensis) protein is Adenylate kinase.